The primary structure comprises 248 residues: FCS-Like Zinc finger 14 (248 aa).

The span at 85-94 (VCRSEPNQPG) shows a compositional bias: polar residues. The segment at 85-108 (VCRSEPNQPGRSDPVQFMSHGGST) is disordered. Residues 181 to 224 (GFLNSCYLCRKKLHGQDIFIYRGEKAFCSTECRSSHIANDERKE) form an FLZ-type zinc finger.

It belongs to the FLZ family. As to quaternary structure, interacts with KIN10 and KIN11 via its FLZ-type zinc finger domain. Interacts with KINB1, KINB2 and KINB3 via its N-terminal part.

It is found in the cytoplasm. Its subcellular location is the nucleus. Its function is as follows. May act as an adapter to facilitate the interaction of SnRK1 complex with effector proteins, conferring tissue- and stimulus-type specific differences in the SnRK1 regulation pathway. In Arabidopsis thaliana (Mouse-ear cress), this protein is FCS-Like Zinc finger 14.